A 218-amino-acid polypeptide reads, in one-letter code: Small ribosomal subunit protein uS3 (218 aa).

One can recognise a KH type-2 domain in the interval 38 to 106 (IRTFLKKKLY…KLVVDIKEVK (69 aa)).

This sequence belongs to the universal ribosomal protein uS3 family. Part of the 30S ribosomal subunit. Forms a tight complex with proteins S10 and S14.

In terms of biological role, binds the lower part of the 30S subunit head. Binds mRNA in the 70S ribosome, positioning it for translation. The chain is Small ribosomal subunit protein uS3 from Agathobacter rectalis (strain ATCC 33656 / DSM 3377 / JCM 17463 / KCTC 5835 / VPI 0990) (Eubacterium rectale).